A 165-amino-acid polypeptide reads, in one-letter code: UPF0254 protein MmarC7_0182 (165 aa).

It belongs to the UPF0254 family.

This is UPF0254 protein MmarC7_0182 from Methanococcus maripaludis (strain C7 / ATCC BAA-1331).